The following is an 877-amino-acid chain: EF-hand domain-containing family member B (877 aa).

Disordered regions lie at residues 1–47 (MCSF…GRKS) and 268–290 (AQQP…PDRI). 2 consecutive EF-hand domains span residues 605–640 (QNFD…ACLH) and 641–676 (LDEK…KDKT). Residues aspartate 618, aspartate 622, glutamate 629, aspartate 654, aspartate 656, aspartate 658, and glutamate 665 each contribute to the Ca(2+) site.

As to quaternary structure, microtubule inner protein component of sperm flagellar doublet microtubules. Interacts with STIM1 and ORAI1; the interactions take place upon Ca(2+)-store depletion and dissociate through a Ca(2+)-dependent mechanism. Interaction with STIM1 inhibits STIM1 interaction with SARAF. Expressed in trachea multiciliated cells.

The protein localises to the cytoplasm. Its subcellular location is the cytoskeleton. The protein resides in the cilium axoneme. It localises to the flagellum axoneme. Microtubule inner protein (MIP) part of the dynein-decorated doublet microtubules (DMTs) in cilia axoneme, which is required for motile cilia beating. Cytosolic sensor for calcium, modulates the interaction of STIM1 and ORAI1 upon store depletion and the activation of store-operated Ca(2+) entry (SOCE) and NFAT translocation from cytosol to nucleus. This chain is EF-hand domain-containing family member B, found in Bos taurus (Bovine).